A 136-amino-acid chain; its full sequence is Aspartate 1-decarboxylase (136 aa).

The active-site Schiff-base intermediate with substrate; via pyruvic acid is S25. S25 carries the pyruvic acid (Ser) modification. T57 is a substrate binding site. Residue Y58 is the Proton donor of the active site. Position 73–75 (G73–A75) interacts with substrate. The tract at residues I117 to N136 is disordered.

Belongs to the PanD family. As to quaternary structure, heterooctamer of four alpha and four beta subunits. Pyruvate is required as a cofactor. In terms of processing, is synthesized initially as an inactive proenzyme, which is activated by self-cleavage at a specific serine bond to produce a beta-subunit with a hydroxyl group at its C-terminus and an alpha-subunit with a pyruvoyl group at its N-terminus.

The protein resides in the cytoplasm. It catalyses the reaction L-aspartate + H(+) = beta-alanine + CO2. It participates in cofactor biosynthesis; (R)-pantothenate biosynthesis; beta-alanine from L-aspartate: step 1/1. Catalyzes the pyruvoyl-dependent decarboxylation of aspartate to produce beta-alanine. The polypeptide is Aspartate 1-decarboxylase (Chloroherpeton thalassium (strain ATCC 35110 / GB-78)).